Consider the following 157-residue polypeptide: Endoribonuclease YbeY (157 aa).

Residues H111, H115, and H121 each contribute to the Zn(2+) site.

It belongs to the endoribonuclease YbeY family. It depends on Zn(2+) as a cofactor.

It localises to the cytoplasm. Its function is as follows. Single strand-specific metallo-endoribonuclease involved in late-stage 70S ribosome quality control and in maturation of the 3' terminus of the 16S rRNA. The chain is Endoribonuclease YbeY from Pseudomonas putida (strain ATCC 47054 / DSM 6125 / CFBP 8728 / NCIMB 11950 / KT2440).